Consider the following 247-residue polypeptide: Coiled-coil domain-containing protein 124 homolog (247 aa).

The disordered stretch occupies residues 1-146; it reads MGGKKFGTNS…TTTTGSDDHE (146 aa). Residues 8-85 are a coiled coil; the sequence is TNSKAEEARS…QEDKEIKERY (78 aa). The span at 11–114 shows a compositional bias: basic and acidic residues; the sequence is KAEEARSKKA…EQKQREKELA (104 aa). Residues 122-140 show a composition bias toward low complexity; it reads VVVVPTTTTTTTTTTTTTT.

Belongs to the CCDC124 family. In terms of assembly, associates with translationally inactive ribosomes in the nonrotated state.

Functionally, ribosome-binding protein involved in ribosome hibernation: associates with translationally inactive ribosomes and stabilizes the nonrotated conformation of the 80S ribosome, thereby promoting ribosome preservation and storage. This chain is Coiled-coil domain-containing protein 124 homolog, found in Dictyostelium discoideum (Social amoeba).